The sequence spans 546 residues: Tegument protein UL21 homolog (546 aa).

It belongs to the alphaherpesvirinae HHV-1 UL21 protein family.

It localises to the virion tegument. Its subcellular location is the host cytoplasm. The protein localises to the host nucleus. In terms of biological role, may facilitate the viral transport through neural circuits. The chain is Tegument protein UL21 homolog (MDV033) from Gallus gallus (Chicken).